Reading from the N-terminus, the 272-residue chain is Formamidopyrimidine-DNA glycosylase (272 aa).

Residue P2 is the Schiff-base intermediate with DNA of the active site. Catalysis depends on E3, which acts as the Proton donor. Catalysis depends on K58, which acts as the Proton donor; for beta-elimination activity. The DNA site is built by H91, R111, and R153. An FPG-type zinc finger spans residues 238-272 (AVYGRANKACVICSKPLKEIRQAQRSTVFCINCQS). The Proton donor; for delta-elimination activity role is filled by R262.

The protein belongs to the FPG family. Monomer. Requires Zn(2+) as cofactor.

It catalyses the reaction Hydrolysis of DNA containing ring-opened 7-methylguanine residues, releasing 2,6-diamino-4-hydroxy-5-(N-methyl)formamidopyrimidine.. The catalysed reaction is 2'-deoxyribonucleotide-(2'-deoxyribose 5'-phosphate)-2'-deoxyribonucleotide-DNA = a 3'-end 2'-deoxyribonucleotide-(2,3-dehydro-2,3-deoxyribose 5'-phosphate)-DNA + a 5'-end 5'-phospho-2'-deoxyribonucleoside-DNA + H(+). Its function is as follows. Involved in base excision repair of DNA damaged by oxidation or by mutagenic agents. Acts as a DNA glycosylase that recognizes and removes damaged bases. Has a preference for oxidized purines, such as 7,8-dihydro-8-oxoguanine (8-oxoG). Has AP (apurinic/apyrimidinic) lyase activity and introduces nicks in the DNA strand. Cleaves the DNA backbone by beta-delta elimination to generate a single-strand break at the site of the removed base with both 3'- and 5'-phosphates. This is Formamidopyrimidine-DNA glycosylase from Marinomonas sp. (strain MWYL1).